Reading from the N-terminus, the 208-residue chain is Outer-membrane lipoprotein carrier protein (208 aa).

The signal sequence occupies residues 1-22; that stretch reads MKKIFAIAALSLPLFSHFPAFA.

It belongs to the LolA family. In terms of assembly, monomer.

The protein resides in the periplasm. In terms of biological role, participates in the translocation of lipoproteins from the inner membrane to the outer membrane. Only forms a complex with a lipoprotein if the residue after the N-terminal Cys is not an aspartate (The Asp acts as a targeting signal to indicate that the lipoprotein should stay in the inner membrane). This is Outer-membrane lipoprotein carrier protein from Shewanella halifaxensis (strain HAW-EB4).